The primary structure comprises 226 residues: 7-cyano-7-deazaguanine synthase (226 aa).

An ATP-binding site is contributed by 10–20 (LSGGLDSATAA). Zn(2+) contacts are provided by C191, C199, C202, and C205.

Belongs to the QueC family. Zn(2+) serves as cofactor.

It carries out the reaction 7-carboxy-7-deazaguanine + NH4(+) + ATP = 7-cyano-7-deazaguanine + ADP + phosphate + H2O + H(+). It participates in purine metabolism; 7-cyano-7-deazaguanine biosynthesis. Its function is as follows. Catalyzes the ATP-dependent conversion of 7-carboxy-7-deazaguanine (CDG) to 7-cyano-7-deazaguanine (preQ(0)). This chain is 7-cyano-7-deazaguanine synthase, found in Synechococcus sp. (strain CC9311).